We begin with the raw amino-acid sequence, 184 residues long: 2-C-methyl-D-erythritol 2,4-cyclodiphosphate synthase (184 aa).

Residues Asp17 and His19 each coordinate a divalent metal cation. 4-CDP-2-C-methyl-D-erythritol 2-phosphate is bound by residues 17–19 (DVH) and 47–48 (HS). His55 is an a divalent metal cation binding site. 4-CDP-2-C-methyl-D-erythritol 2-phosphate contacts are provided by residues 74–78 (FPNTD), Phe152, and Arg155.

The protein belongs to the IspF family. Homotrimer. Requires a divalent metal cation as cofactor.

It catalyses the reaction 4-CDP-2-C-methyl-D-erythritol 2-phosphate = 2-C-methyl-D-erythritol 2,4-cyclic diphosphate + CMP. It participates in isoprenoid biosynthesis; isopentenyl diphosphate biosynthesis via DXP pathway; isopentenyl diphosphate from 1-deoxy-D-xylulose 5-phosphate: step 4/6. Involved in the biosynthesis of isopentenyl diphosphate (IPP) and dimethylallyl diphosphate (DMAPP), two major building blocks of isoprenoid compounds. Catalyzes the conversion of 4-diphosphocytidyl-2-C-methyl-D-erythritol 2-phosphate (CDP-ME2P) to 2-C-methyl-D-erythritol 2,4-cyclodiphosphate (ME-CPP) with a corresponding release of cytidine 5-monophosphate (CMP). In Anaplasma marginale (strain St. Maries), this protein is 2-C-methyl-D-erythritol 2,4-cyclodiphosphate synthase.